A 472-amino-acid chain; its full sequence is Siroheme synthase (472 aa).

Residues 1–207 (MNFLPIFLDI…GKDQAAKAWL (207 aa)) are precorrin-2 dehydrogenase /sirohydrochlorin ferrochelatase. NAD(+)-binding positions include 22–23 (EV) and 43–44 (PR). Serine 132 is subject to Phosphoserine. The uroporphyrinogen-III C-methyltransferase stretch occupies residues 221 to 472 (GEVYLVGAGP…QPEGNLPGAE (252 aa)). Proline 230 is an S-adenosyl-L-methionine binding site. The active-site Proton acceptor is aspartate 253. The active-site Proton donor is lysine 275. Residues 306-308 (GGD), isoleucine 311, 336-337 (TA), methionine 388, and glycine 417 contribute to the S-adenosyl-L-methionine site.

The protein in the N-terminal section; belongs to the precorrin-2 dehydrogenase / sirohydrochlorin ferrochelatase family. This sequence in the C-terminal section; belongs to the precorrin methyltransferase family.

The catalysed reaction is uroporphyrinogen III + 2 S-adenosyl-L-methionine = precorrin-2 + 2 S-adenosyl-L-homocysteine + H(+). It carries out the reaction precorrin-2 + NAD(+) = sirohydrochlorin + NADH + 2 H(+). The enzyme catalyses siroheme + 2 H(+) = sirohydrochlorin + Fe(2+). The protein operates within cofactor biosynthesis; adenosylcobalamin biosynthesis; precorrin-2 from uroporphyrinogen III: step 1/1. It participates in cofactor biosynthesis; adenosylcobalamin biosynthesis; sirohydrochlorin from precorrin-2: step 1/1. It functions in the pathway porphyrin-containing compound metabolism; siroheme biosynthesis; precorrin-2 from uroporphyrinogen III: step 1/1. Its pathway is porphyrin-containing compound metabolism; siroheme biosynthesis; siroheme from sirohydrochlorin: step 1/1. The protein operates within porphyrin-containing compound metabolism; siroheme biosynthesis; sirohydrochlorin from precorrin-2: step 1/1. Functionally, multifunctional enzyme that catalyzes the SAM-dependent methylations of uroporphyrinogen III at position C-2 and C-7 to form precorrin-2 via precorrin-1. Then it catalyzes the NAD-dependent ring dehydrogenation of precorrin-2 to yield sirohydrochlorin. Finally, it catalyzes the ferrochelation of sirohydrochlorin to yield siroheme. This Nitrosospira multiformis (strain ATCC 25196 / NCIMB 11849 / C 71) protein is Siroheme synthase.